We begin with the raw amino-acid sequence, 181 residues long: Probable integrase/recombinase YoeC (181 aa).

Positions 3 to 176 (IVQPIRSLEK…DEDTTRAAYK (174 aa)) constitute a Tyr recombinase domain. Residues Arg40, Lys64, His128, Arg131, and His154 contribute to the active site. The O-(3'-phospho-DNA)-tyrosine intermediate role is filled by Tyr163.

Belongs to the 'phage' integrase family.

The polypeptide is Probable integrase/recombinase YoeC (yoeC) (Bacillus subtilis (strain 168)).